We begin with the raw amino-acid sequence, 62 residues long: Conotoxin TeAr151 (62 aa).

Residues 1-22 (MRCLPVFVVLLLLIASAPSVDA) form the signal peptide. The propeptide occupies 23-47 (QPKTKDDVPLAPLHDNIQNTLQTLR). Methionine 55 carries the post-translational modification Methionine sulfoxide; partial. The residue at position 60 (serine 60) is a Serine amide.

This sequence belongs to the conotoxin T superfamily. Contains 2 disulfide bonds. Post-translationally, contains 2 disulfide bonds that can be either 'C1-C3, C2-C4' or 'C1-C4, C2-C3', since these disulfide connectivities have been observed for conotoxins with cysteine framework V (for examples, see AC P0DQQ7 and AC P81755).. As to expression, expressed by the venom duct. Is mostly present in part 5 of the venom duct (distal part near the pharynx), and less abundantly present in part 4 of the venom duct.

It localises to the secreted. In Conus textile (Cloth-of-gold cone), this protein is Conotoxin TeAr151.